We begin with the raw amino-acid sequence, 215 residues long: Probable nicotinate-nucleotide adenylyltransferase (215 aa).

This sequence belongs to the NadD family.

It carries out the reaction nicotinate beta-D-ribonucleotide + ATP + H(+) = deamido-NAD(+) + diphosphate. It participates in cofactor biosynthesis; NAD(+) biosynthesis; deamido-NAD(+) from nicotinate D-ribonucleotide: step 1/1. Catalyzes the reversible adenylation of nicotinate mononucleotide (NaMN) to nicotinic acid adenine dinucleotide (NaAD). The polypeptide is Probable nicotinate-nucleotide adenylyltransferase (Fervidobacterium nodosum (strain ATCC 35602 / DSM 5306 / Rt17-B1)).